A 334-amino-acid chain; its full sequence is Ribonucleoside-diphosphate reductase small chain (334 aa).

Aspartate 77, glutamate 108, and histidine 111 together coordinate Fe cation. The active site involves tyrosine 115. Positions 171, 205, and 208 each coordinate Fe cation.

This sequence belongs to the ribonucleoside diphosphate reductase small chain family. In terms of assembly, heterotetramer composed of a homodimer of the large subunit (R1) and a homodimer of the small subunit (R2). Larger multisubunit protein complex are also active, composed of (R1)n(R2)n. It depends on Fe cation as a cofactor.

The catalysed reaction is a 2'-deoxyribonucleoside 5'-diphosphate + [thioredoxin]-disulfide + H2O = a ribonucleoside 5'-diphosphate + [thioredoxin]-dithiol. Functionally, ribonucleoside-diphosphate reductase holoenzyme provides the precursors necessary for viral DNA synthesis. Allows virus growth in non-dividing cells. Catalyzes the biosynthesis of deoxyribonucleotides from the corresponding ribonucleotides. The polypeptide is Ribonucleoside-diphosphate reductase small chain (Ornithodoros (relapsing fever ticks)).